The sequence spans 248 residues: Probable N-acetylglucosaminyl-phosphatidylinositol de-N-acetylase (248 aa).

Over 1-7 the chain is Lumenal; the sequence is MIWFWST. The helical transmembrane segment at 8 to 24 threads the bilayer; that stretch reads LLVTAIAVLSTANESSS. Residues 25 to 248 lie on the Cytoplasmic side of the membrane; that stretch reads GQEKLAVESI…MSNNVLKRAT (224 aa).

It belongs to the PIGL family.

Its subcellular location is the endoplasmic reticulum membrane. The catalysed reaction is a 6-(N-acetyl-alpha-D-glucosaminyl)-1-(1,2-diacyl-sn-glycero-3-phospho)-1D-myo-inositol + H2O = a 6-(alpha-D-glucosaminyl)-1-(1,2-diacyl-sn-glycero-3-phospho)-1D-myo-inositol + acetate. Its pathway is glycolipid biosynthesis; glycosylphosphatidylinositol-anchor biosynthesis. Involved in the second step of GPI biosynthesis. De-N-acetylation of N-acetylglucosaminyl-phosphatidylinositol. The protein is Probable N-acetylglucosaminyl-phosphatidylinositol de-N-acetylase (gpi12) of Schizosaccharomyces pombe (strain 972 / ATCC 24843) (Fission yeast).